The chain runs to 447 residues: tRNA(Ile)-lysidine synthase (447 aa).

Position 31–36 (31–36 (SGGMDS)) interacts with ATP.

Belongs to the tRNA(Ile)-lysidine synthase family.

Its subcellular location is the cytoplasm. It carries out the reaction cytidine(34) in tRNA(Ile2) + L-lysine + ATP = lysidine(34) in tRNA(Ile2) + AMP + diphosphate + H(+). Ligates lysine onto the cytidine present at position 34 of the AUA codon-specific tRNA(Ile) that contains the anticodon CAU, in an ATP-dependent manner. Cytidine is converted to lysidine, thus changing the amino acid specificity of the tRNA from methionine to isoleucine. This chain is tRNA(Ile)-lysidine synthase, found in Pseudothermotoga lettingae (strain ATCC BAA-301 / DSM 14385 / NBRC 107922 / TMO) (Thermotoga lettingae).